Here is a 187-residue protein sequence, read N- to C-terminus: Large ribosomal subunit protein uL24c (187 aa).

Residues 1–41 (MAALQSSFAGLSTSFFGQRFSPPLSLPPLVKSTEGPCLIQA) constitute a chloroplast transit peptide.

The protein belongs to the universal ribosomal protein uL24 family. Part of the 50S ribosomal subunit.

The protein localises to the plastid. It localises to the chloroplast. One of two assembly initiator proteins, it binds directly to the 5'-end of the 23S rRNA, where it nucleates assembly of the 50S subunit. This chain is Large ribosomal subunit protein uL24c (RPL24), found in Nicotiana tabacum (Common tobacco).